A 238-amino-acid polypeptide reads, in one-letter code: Ribonuclease PH (238 aa).

Phosphate is bound by residues R86 and G124–R126.

The protein belongs to the RNase PH family. Homohexameric ring arranged as a trimer of dimers.

It catalyses the reaction tRNA(n+1) + phosphate = tRNA(n) + a ribonucleoside 5'-diphosphate. Functionally, phosphorolytic 3'-5' exoribonuclease that plays an important role in tRNA 3'-end maturation. Removes nucleotide residues following the 3'-CCA terminus of tRNAs; can also add nucleotides to the ends of RNA molecules by using nucleoside diphosphates as substrates, but this may not be physiologically important. Probably plays a role in initiation of 16S rRNA degradation (leading to ribosome degradation) during starvation. This Actinobacillus succinogenes (strain ATCC 55618 / DSM 22257 / CCUG 43843 / 130Z) protein is Ribonuclease PH.